Reading from the N-terminus, the 379-residue chain is Cobalt-precorrin-5B C(1)-methyltransferase (379 aa).

It belongs to the CbiD family.

The catalysed reaction is Co-precorrin-5B + S-adenosyl-L-methionine = Co-precorrin-6A + S-adenosyl-L-homocysteine. It functions in the pathway cofactor biosynthesis; adenosylcobalamin biosynthesis; cob(II)yrinate a,c-diamide from sirohydrochlorin (anaerobic route): step 6/10. Its function is as follows. Catalyzes the methylation of C-1 in cobalt-precorrin-5B to form cobalt-precorrin-6A. This chain is Cobalt-precorrin-5B C(1)-methyltransferase, found in Salmonella schwarzengrund (strain CVM19633).